Reading from the N-terminus, the 223-residue chain is MRIFRGCTQPSTLGQGVHSPLMKAQFITHHSRKQVKPGEGWGRSSFTRACRDHTTILSGNRSFSAVAATPAKHKHMHTRTHTHMHTHTGMHTLTGTHVHTPHTQMHTRILTLSHMHTHAHTHAHTHGHTHTRAHSTHAHTHAHSHYHTRTLTLTHSHAHSCTLTSTITHMHTHTHMHTHTSTLTRTLTLTHTHMHTFLSLVSHLAGYISCQFIFSSENPRLCH.

Residues 117–148 (THAHTHAHTHGHTHTRAHSTHAHTHAHSHYHT) form a disordered region.

This is an uncharacterized protein from Homo sapiens (Human).